The primary structure comprises 71 residues: uncharacterized protein (71 aa).

The interval 1–20 (MQKLNKHLKKKKQKRKKMKK) is disordered.

This is an uncharacterized protein from Methanocaldococcus jannaschii (strain ATCC 43067 / DSM 2661 / JAL-1 / JCM 10045 / NBRC 100440) (Methanococcus jannaschii).